The chain runs to 430 residues: MATLSVKPSQRFQLPDWHTNSYLLSTNAQLQRDASHQIRQEARVLRNETNNQTIWDEHDNRTRLVERIDTVNRWKEMLDKCLTDLDAEIDALTQMKDSAGQNLQAKNLPLDVAIECLTLRESRRDIDVVKDPVEDELHKEVEVIEATKKALQQKVSQAFEHLCLLQEVRQQLNSDHRGKMETLEIDRGCLSLNLRSPNISLKVDPTRVPDGSTTLQQWDDFSQFNKDRGEAEMKAATELREAIALTIAETNNELEAQRVATEFAFRKRLREMEKVYSELKWQEKNTLEEIAELQEDIRHLEEDLRTKFLSLKLSHTRLEARTYRPNVELCRDQAQYGLTDEVHQLEATIAALKQKLAQAQDALDALYKHLARLQADIACKANSMLLDTKCMDTRRKLTVPAEKFVPEVDTFTRTTNSTLSPLKSCQLELA.

2 coiled-coil regions span residues 82 to 160 (LTDL…QAFE) and 273 to 379 (EKVY…DIAC).

The protein belongs to the tektin family. Microtubule inner protein component of sperm flagellar doublet microtubules. May interact with CCDC172. In terms of processing, tyrosine phosphorylated. Ubiquitinated, leading to its degradation. Deubiquitinated by USP16, promoting its stability.

It is found in the cytoplasm. It localises to the cytoskeleton. The protein localises to the cilium axoneme. Its subcellular location is the flagellum axoneme. The protein resides in the microtubule organizing center. Its function is as follows. Microtubule inner protein (MIP) part of the dynein-decorated doublet microtubules (DMTs) in cilia and flagellar axoneme. Plays a key role in the assembly or attachment of the inner dynein arm to microtubules in sperm flagella and tracheal cilia. Forms filamentous polymers in the walls of ciliary and flagellar microtubules. This chain is Tektin-2 (TEKT2), found in Macaca fascicularis (Crab-eating macaque).